The sequence spans 100 residues: MRALTLLALLALAALCIAGQAGAKPSGAESSKGAAFVSKQEGSEVVKRPRRYLYQWLGAPVPYPDTLEPRREVCELNPDCDELADHIGFQEAYRRFYGPV.

A signal peptide spans 1 to 23 (MRALTLLALLALAALCIAGQAGA). A propeptide spanning residues 24–51 (KPSGAESSKGAAFVSKQEGSEVVKRPRR) is cleaved from the precursor. The region spanning 52–98 (YLYQWLGAPVPYPDTLEPRREVCELNPDCDELADHIGFQEAYRRFYG) is the Gla domain. Glu-68, Glu-72, Glu-75, and Asp-81 together coordinate Ca(2+). 4-carboxyglutamate occurs at positions 68, 72, and 75. A disulfide bond links Cys-74 and Cys-80.

It belongs to the osteocalcin/matrix Gla protein family. Post-translationally, gamma-carboxyglutamate residues are formed by vitamin K dependent carboxylation by GGCX. These residues are essential for the binding of calcium. Decarboxylation promotes the hormone activity.

The protein resides in the secreted. The carboxylated form is one of the main organic components of the bone matrix, which constitutes 1-2% of the total bone protein: it acts as a negative regulator of bone formation and is required to limit bone formation without impairing bone resorption or mineralization. The carboxylated form binds strongly to apatite and calcium. In terms of biological role, the uncarboxylated form acts as a hormone secreted by osteoblasts, which regulates different cellular processes, such as energy metabolism, male fertility and brain development. Regulates of energy metabolism by acting as a hormone favoring pancreatic beta-cell proliferation, insulin secretion and sensitivity and energy expenditure. Uncarboxylated osteocalcin hormone also promotes testosterone production in the testes: acts as a ligand for G protein-coupled receptor GPRC6A at the surface of Leydig cells, initiating a signaling response that promotes the expression of enzymes required for testosterone synthesis in a CREB-dependent manner. Also acts as a regulator of brain development: osteocalcin hormone crosses the blood-brain barrier and acts as a ligand for GPR158 on neurons, initiating a signaling response that prevents neuronal apoptosis in the hippocampus, favors the synthesis of all monoamine neurotransmitters and inhibits that of gamma-aminobutyric acid (GABA). Osteocalcin also crosses the placenta during pregnancy and maternal osteocalcin is required for fetal brain development. The chain is Osteocalcin from Pan troglodytes (Chimpanzee).